The following is a 335-amino-acid chain: MTAPPVHDRAHHPVRDVIVIGSGPAGYTAALYAARAQLAPLVFEGTSFGGALMTTTDVENYPGFRNGITGPELMDEMREQALRFGADLRMEDVESVSLHGPLKSVVTADGQTHRARAVILAMGAAARYLQVPGEQELLGRGVSSCATCDGFFFRDQDIAVIGGGDSAMEEATFLTRFARSVTLVHRRDEFRASKIMLDRARNNDKIRFLTNHTVVAVDGDTTVTGLRVRDTNTGAETTLPVTGVFVAIGHEPRSGLVREAIDVDPDGYVLVQGRTTSTSLPGVFAAGDLVDRTYRQAVTAAGSGCAAAIDAERWLAEHAATGEADSTDALIGAQR.

Residues Ser-22 to Ala-25, Glu-44 to Ala-51, Asn-60, and Val-93 each bind FAD. A disulfide bridge connects residues Cys-145 and Cys-148. Positions 166, 185, 191, 248, and 268 each coordinate NADP(+). FAD is bound by residues Asp-288 and Arg-295–Val-298. Arg-295 serves as a coordination point for NADP(+).

This sequence belongs to the class-II pyridine nucleotide-disulfide oxidoreductase family. As to quaternary structure, homodimer. FAD serves as cofactor.

It localises to the cytoplasm. The catalysed reaction is [thioredoxin]-dithiol + NADP(+) = [thioredoxin]-disulfide + NADPH + H(+). In Mycobacterium tuberculosis (strain CDC 1551 / Oshkosh), this protein is Thioredoxin reductase.